The following is a 182-amino-acid chain: Troponin I, fast skeletal muscle (182 aa).

The residue at position 2 (Gly2) is an N-acetylglycine. An involved in binding TNC region spans residues 2 to 48; the sequence is GDEEKRNRAITARRQHLKSVMLQIAATELEKEESRRESEKENYLSEH. Thr12 is modified (phosphothreonine). Basic and acidic residues predominate over residues 29–45; it reads ELEKEESRRESEKENYL. The disordered stretch occupies residues 29–53; it reads ELEKEESRRESEKENYLSEHCPPLH. Positions 97–117 are involved in binding TNC and actin; it reads NQKLFDLRGKFKRPPLRRVRM. Position 118 is a phosphoserine (Ser118).

This sequence belongs to the troponin I family. In terms of assembly, binds to actin and tropomyosin.

Functionally, troponin I is the inhibitory subunit of troponin, the thin filament regulatory complex which confers calcium-sensitivity to striated muscle actomyosin ATPase activity. This chain is Troponin I, fast skeletal muscle (Tnni2), found in Mus musculus (Mouse).